Here is a 750-residue protein sequence, read N- to C-terminus: Polyribonucleotide nucleotidyltransferase (750 aa).

Mg(2+) is bound by residues aspartate 492 and aspartate 498. The 60-residue stretch at 559 to 618 (PQLSVVEVNPEIIRVIIGPGGKNIKAITSATGASIDIEDSGRISIFAPTKESMDMAREMV) folds into the KH domain. The region spanning 628–695 (GKNYTAKVRK…NDGRVRASRK (68 aa)) is the S1 motif domain. The segment at 705-750 (EWDPADTARPPRKPRDRDDRGDRGGRGDRGDRGGRNGRGGDRRDRR) is disordered. A compositionally biased stretch (basic and acidic residues) spans 717 to 750 (KPRDRDDRGDRGGRGDRGDRGGRNGRGGDRRDRR).

Belongs to the polyribonucleotide nucleotidyltransferase family. It depends on Mg(2+) as a cofactor.

The protein resides in the cytoplasm. It carries out the reaction RNA(n+1) + phosphate = RNA(n) + a ribonucleoside 5'-diphosphate. Functionally, involved in mRNA degradation. Catalyzes the phosphorolysis of single-stranded polyribonucleotides processively in the 3'- to 5'-direction. The chain is Polyribonucleotide nucleotidyltransferase from Oleidesulfovibrio alaskensis (strain ATCC BAA-1058 / DSM 17464 / G20) (Desulfovibrio alaskensis).